The sequence spans 283 residues: MKTPFRKMDGLGNQIIVADMRESTHALTPQAILALAADPQTHFDQIMTIHSSTQKEADFRIEIWNADGSMAKACGNGTRCVIAWLTDHNLGESFRLETPAGIIEGKRQTDNLISVDMGCPNFNAKEMPVSREIADTNYVKITAGPLKDACLVSIGNLHAIFFVEDNIQQIPLEKYGPKLEHDPLFPERCNISIASVTSHKSLNLRTWERGAGLTKACGSAACASAVAAYRRGLTQRHIDVNLPGGTLNIVYREDNHIVMTGPTKYEFGGFLNPLTGTYKKDHF.

Residues asparagine 13, glutamine 45, and asparagine 65 each coordinate substrate. Cysteine 74 (proton donor) is an active-site residue. Substrate is bound by residues 75 to 76 (GN), asparagine 156, asparagine 190, and 208 to 209 (ER). The active-site Proton acceptor is cysteine 217. 218-219 (GS) lines the substrate pocket.

This sequence belongs to the diaminopimelate epimerase family. As to quaternary structure, homodimer.

Its subcellular location is the cytoplasm. It catalyses the reaction (2S,6S)-2,6-diaminopimelate = meso-2,6-diaminopimelate. It functions in the pathway amino-acid biosynthesis; L-lysine biosynthesis via DAP pathway; DL-2,6-diaminopimelate from LL-2,6-diaminopimelate: step 1/1. In terms of biological role, catalyzes the stereoinversion of LL-2,6-diaminopimelate (L,L-DAP) to meso-diaminopimelate (meso-DAP), a precursor of L-lysine and an essential component of the bacterial peptidoglycan. In Bartonella quintana (strain Toulouse) (Rochalimaea quintana), this protein is Diaminopimelate epimerase.